The primary structure comprises 83 residues: uncharacterized protein (83 aa).

A helical transmembrane segment spans residues 58-80 (YWGYGAAYGISLGLIAGVALAGL).

The protein localises to the membrane. This is an uncharacterized protein from Bacillus subtilis (strain 168).